A 182-amino-acid chain; its full sequence is MLKLFRETGLRFLWISALAFILDQWSKYTVIDTMSLYQSIQVLPFFNFTYVHNYGAAFSFLENAGGWQRWFFTAIAVVVSVVILWWLKQSPRSQKMLPVAFAFILGGALGNVYDRLVHGYVIDFLDFYVNNYHWPAFNIADSAIFIGAALLIIDMFKNGDKKSEENGAESKAGSANSSETIK.

A run of 4 helical transmembrane segments spans residues 12–32 (FLWI…TVID), 40–60 (IQVL…AFSF), 70–90 (WFFT…LKQS), and 97–117 (LPVA…DRLV). Catalysis depends on residues Asp123 and Asp141. The chain crosses the membrane as a helical span at residues 136–156 (AFNIADSAIFIGAALLIIDMF). The segment at 161–182 (KKSEENGAESKAGSANSSETIK) is disordered. Polar residues predominate over residues 173–182 (GSANSSETIK).

The protein belongs to the peptidase A8 family.

The protein localises to the cell inner membrane. It carries out the reaction Release of signal peptides from bacterial membrane prolipoproteins. Hydrolyzes -Xaa-Yaa-Zaa-|-(S,diacylglyceryl)Cys-, in which Xaa is hydrophobic (preferably Leu), and Yaa (Ala or Ser) and Zaa (Gly or Ala) have small, neutral side chains.. The protein operates within protein modification; lipoprotein biosynthesis (signal peptide cleavage). This protein specifically catalyzes the removal of signal peptides from prolipoproteins. In Alteromonas mediterranea (strain DSM 17117 / CIP 110805 / LMG 28347 / Deep ecotype), this protein is Lipoprotein signal peptidase.